Here is a 500-residue protein sequence, read N- to C-terminus: Probable trehalose-phosphate phosphatase 8 (500 aa).

It belongs to the trehalose phosphatase family. Requires a divalent metal cation as cofactor.

The catalysed reaction is alpha,alpha-trehalose 6-phosphate + H2O = alpha,alpha-trehalose + phosphate. It functions in the pathway glycan biosynthesis; trehalose biosynthesis. Its function is as follows. Removes the phosphate from trehalose 6-phosphate to produce free trehalose. Trehalose accumulation in plant may improve abiotic stress tolerance. In Oryza sativa subsp. japonica (Rice), this protein is Probable trehalose-phosphate phosphatase 8 (TPP8).